A 246-amino-acid polypeptide reads, in one-letter code: 5'-nucleotidase SurE (246 aa).

A divalent metal cation is bound by residues D8, D9, S39, and N91.

It belongs to the SurE nucleotidase family. It depends on a divalent metal cation as a cofactor.

The protein resides in the cytoplasm. The catalysed reaction is a ribonucleoside 5'-phosphate + H2O = a ribonucleoside + phosphate. In terms of biological role, nucleotidase that shows phosphatase activity on nucleoside 5'-monophosphates. The protein is 5'-nucleotidase SurE of Actinobacillus succinogenes (strain ATCC 55618 / DSM 22257 / CCUG 43843 / 130Z).